Reading from the N-terminus, the 210-residue chain is Redox-sensing transcriptional repressor Rex (210 aa).

The segment at residues 17–56 is a DNA-binding region (H-T-H motif); the sequence is SYLHLVKKAEADKLEYISGTVIAEELELEPIQVRKDLTIT. 91–96 is an NAD(+) binding site; that stretch reads GAGSLG.

This sequence belongs to the transcriptional regulatory Rex family. In terms of assembly, homodimer.

It is found in the cytoplasm. Modulates transcription in response to changes in cellular NADH/NAD(+) redox state. This chain is Redox-sensing transcriptional repressor Rex, found in Treponema denticola (strain ATCC 35405 / DSM 14222 / CIP 103919 / JCM 8153 / KCTC 15104).